The chain runs to 1505 residues: Probable serine/threonine-protein kinase irlD (1505 aa).

Basic residues predominate over residues 1–18 (MGPKKGKRSHSKNHHHHN). Disordered regions lie at residues 1–30 (MGPK…NSGG), 121–211 (IPQP…NNIL), 548–571 (TTTT…DKEN), and 862–1013 (EENE…TIAT). The segment covering 139-158 (SISTTTTTTTATAIEIESSS) has biased composition (low complexity). The segment covering 159 to 172 (GLTSNITDSTEIQL) has biased composition (polar residues). Composition is skewed to low complexity over residues 173–209 (DSTT…NSNN) and 548–561 (TTTT…TTTT). Composition is skewed to basic and acidic residues over residues 562-571 (IDKDEKDKEN) and 862-882 (EENE…EKKK). Residues 846 to 892 (IRTEESLKAEKDLLEQEENEKKRLKEKRKKEEKEKKKQQNLKQKSLI) are a coiled coil. Positions 896–924 (TTTTTTTTPIPITVPIPTQTQTPTQTPTQ) are enriched in low complexity. Residues 925-943 (TPIPTPIPTTPIPTTPIPI) show a composition bias toward pro residues. Low complexity-rich tracts occupy residues 944–954 (PIQLTPTTPKT) and 960–977 (TPKT…KTPK). A compositionally biased stretch (polar residues) spans 978 to 989 (NSTLDKQTISTP). Positions 1054–1324 (RKDEFIIGRG…TENILLHPFF (271 aa)) constitute a Protein kinase domain. ATP contacts are provided by residues 1060 to 1068 (IGRGSNGTL) and lysine 1083. Aspartate 1194 (proton acceptor) is an active-site residue. The KEN domain occupies 1327–1505 (HEKKVKFIDA…LIYFNDLIIK (179 aa)).

Belongs to the protein kinase superfamily. Ser/Thr protein kinase family.

It catalyses the reaction L-seryl-[protein] + ATP = O-phospho-L-seryl-[protein] + ADP + H(+). The enzyme catalyses L-threonyl-[protein] + ATP = O-phospho-L-threonyl-[protein] + ADP + H(+). The chain is Probable serine/threonine-protein kinase irlD (irlD) from Dictyostelium discoideum (Social amoeba).